A 243-amino-acid polypeptide reads, in one-letter code: Ubiquinone/menaquinone biosynthesis C-methyltransferase UbiE (243 aa).

S-adenosyl-L-methionine-binding positions include Thr69, Asp90, and 116–117 (DA).

It belongs to the class I-like SAM-binding methyltransferase superfamily. MenG/UbiE family.

The catalysed reaction is a 2-demethylmenaquinol + S-adenosyl-L-methionine = a menaquinol + S-adenosyl-L-homocysteine + H(+). It carries out the reaction a 2-methoxy-6-(all-trans-polyprenyl)benzene-1,4-diol + S-adenosyl-L-methionine = a 5-methoxy-2-methyl-3-(all-trans-polyprenyl)benzene-1,4-diol + S-adenosyl-L-homocysteine + H(+). It functions in the pathway quinol/quinone metabolism; menaquinone biosynthesis; menaquinol from 1,4-dihydroxy-2-naphthoate: step 2/2. The protein operates within cofactor biosynthesis; ubiquinone biosynthesis. Methyltransferase required for the conversion of demethylmenaquinol (DMKH2) to menaquinol (MKH2) and the conversion of 2-polyprenyl-6-methoxy-1,4-benzoquinol (DDMQH2) to 2-polyprenyl-3-methyl-6-methoxy-1,4-benzoquinol (DMQH2). This is Ubiquinone/menaquinone biosynthesis C-methyltransferase UbiE from Paraburkholderia phymatum (strain DSM 17167 / CIP 108236 / LMG 21445 / STM815) (Burkholderia phymatum).